A 319-amino-acid chain; its full sequence is MKKDDSLKKFKYKVAAFYNFISIIDEEILLIKEELTNLATNQKIKGTILLASEGVNGTICGTENAIVLFIETLENLLKVSDINVKYSWCERQAFRRFKARKKKEIVTIGLKEINPTKSVGKYIKAGEWNQFLEDPDSVVIDTRNDYEIKIGNFAGALNPQTSSFREFPAWVQKHLKPLIEENPSLKIGMYCTGGIRCEKATSYLIEEGFSDVHHLEGGILKYLEDVSSENSLWNGECFVFDQRVSLDHELLPGSHRMCHACGLPISPEDLKKPTYIKGLQCDACVNKFTDSDRARFAERQRQIDEIMKRLPENSIWPSS.

A Rhodanese domain is found at 133 to 231 (EDPDSVVIDT…YLEDVSSENS (99 aa)). The active-site Cysteine persulfide intermediate is the cysteine 191.

It belongs to the TrhO family.

It carries out the reaction uridine(34) in tRNA + AH2 + O2 = 5-hydroxyuridine(34) in tRNA + A + H2O. Catalyzes oxygen-dependent 5-hydroxyuridine (ho5U) modification at position 34 in tRNAs. The sequence is that of tRNA uridine(34) hydroxylase from Prochlorococcus marinus (strain NATL1A).